A 422-amino-acid polypeptide reads, in one-letter code: UPF0229 protein Spro_2732 (422 aa).

The span at P77 to R90 shows a compositional bias: basic and acidic residues. Residues P77–E109 form a disordered region. The span at Q92 to Q101 shows a compositional bias: gly residues.

It belongs to the UPF0229 family.

The polypeptide is UPF0229 protein Spro_2732 (Serratia proteamaculans (strain 568)).